The following is a 419-amino-acid chain: C2 calcium-dependent domain-containing protein 4C (419 aa).

4 disordered regions span residues 1 to 96, 115 to 136, 151 to 225, and 247 to 300; these read MRKT…LASE, EDWT…MSLP, AESP…SPFG, and VSQL…HTVK. The span at 75–94 shows a compositional bias: low complexity; sequence LASPGPRRAPRSPRLPAKLA. Gly residues predominate over residues 186–196; sequence KGNGGDGGSRE. Polar residues predominate over residues 212-225; it reads ESDTGSSAESSPFG. Phosphoserine is present on residues S259, S261, and S270. A C2 domain is found at 303 to 419; sequence TRGSVRLLAE…LPLTSLLPFL (117 aa).

Belongs to the C2CD4 family.

This Mus musculus (Mouse) protein is C2 calcium-dependent domain-containing protein 4C (C2cd4c).